Here is a 164-residue protein sequence, read N- to C-terminus: Transcription elongation factor GreA (164 aa).

It belongs to the GreA/GreB family.

In terms of biological role, necessary for efficient RNA polymerase transcription elongation past template-encoded arresting sites. The arresting sites in DNA have the property of trapping a certain fraction of elongating RNA polymerases that pass through, resulting in locked ternary complexes. Cleavage of the nascent transcript by cleavage factors such as GreA or GreB allows the resumption of elongation from the new 3'terminus. GreA releases sequences of 2 to 3 nucleotides. The polypeptide is Transcription elongation factor GreA (Helicobacter pylori (strain Shi470)).